A 335-amino-acid polypeptide reads, in one-letter code: Nucleoid-associated protein SeAg_B2375 (335 aa).

It belongs to the YejK family.

It is found in the cytoplasm. The protein localises to the nucleoid. The sequence is that of Nucleoid-associated protein SeAg_B2375 from Salmonella agona (strain SL483).